Reading from the N-terminus, the 103-residue chain is Large ribosomal subunit protein uL23 (103 aa).

Belongs to the universal ribosomal protein uL23 family. Part of the 50S ribosomal subunit. Contacts protein L29, and trigger factor when it is bound to the ribosome.

In terms of biological role, one of the early assembly proteins it binds 23S rRNA. One of the proteins that surrounds the polypeptide exit tunnel on the outside of the ribosome. Forms the main docking site for trigger factor binding to the ribosome. This chain is Large ribosomal subunit protein uL23, found in Chlorobium phaeobacteroides (strain DSM 266 / SMG 266 / 2430).